The chain runs to 372 residues: Glutamate 5-kinase (372 aa).

Lysine 14 contributes to the ATP binding site. Substrate-binding residues include serine 54, aspartate 141, and asparagine 153. Threonine 173–aspartate 174 contacts ATP. Residues arginine 280–leucine 358 enclose the PUA domain.

It belongs to the glutamate 5-kinase family.

It localises to the cytoplasm. It carries out the reaction L-glutamate + ATP = L-glutamyl 5-phosphate + ADP. The protein operates within amino-acid biosynthesis; L-proline biosynthesis; L-glutamate 5-semialdehyde from L-glutamate: step 1/2. Catalyzes the transfer of a phosphate group to glutamate to form L-glutamate 5-phosphate. The sequence is that of Glutamate 5-kinase from Cupriavidus taiwanensis (strain DSM 17343 / BCRC 17206 / CCUG 44338 / CIP 107171 / LMG 19424 / R1) (Ralstonia taiwanensis (strain LMG 19424)).